The primary structure comprises 302 residues: 4-hydroxy-tetrahydrodipicolinate synthase (302 aa).

Threonine 55 is a binding site for pyruvate. Tyrosine 144 serves as the catalytic Proton donor/acceptor. Catalysis depends on lysine 172, which acts as the Schiff-base intermediate with substrate. Valine 214 contacts pyruvate.

This sequence belongs to the DapA family. In terms of assembly, homotetramer; dimer of dimers.

It is found in the cytoplasm. The catalysed reaction is L-aspartate 4-semialdehyde + pyruvate = (2S,4S)-4-hydroxy-2,3,4,5-tetrahydrodipicolinate + H2O + H(+). The protein operates within amino-acid biosynthesis; L-lysine biosynthesis via DAP pathway; (S)-tetrahydrodipicolinate from L-aspartate: step 3/4. Catalyzes the condensation of (S)-aspartate-beta-semialdehyde [(S)-ASA] and pyruvate to 4-hydroxy-tetrahydrodipicolinate (HTPA). This chain is 4-hydroxy-tetrahydrodipicolinate synthase, found in Synechococcus sp. (strain CC9605).